Here is a 260-residue protein sequence, read N- to C-terminus: MPTFYDKTFTSRLLIGTALYPSPAIMQDAIRASGAEIVTVSLRREAAGGKSGDAFWKLIRELNVTVLPNTAGCRSVREAVTTAKLARELFGTSWIKLEVIADNDTLQPDVVGLVEAATILIKDGFEVFPYCTEDLSVATRLVDAGCKVVMPWAAPIGSAKGIINRDALKLLRDRLPDITLVVDAGLGAPSHAAEALELGYDAVLLNTAVAKAADPVAMARAFRLGCDAGRTAYEAGLMDARDFASPSTPVVGTPFWHAVS.

Lys-96 (schiff-base intermediate with DXP) is an active-site residue. 1-deoxy-D-xylulose 5-phosphate contacts are provided by residues Gly-157, 184 to 185 (AG), and 206 to 207 (NT).

It belongs to the ThiG family. Homotetramer. Forms heterodimers with either ThiH or ThiS.

The protein localises to the cytoplasm. It catalyses the reaction [ThiS sulfur-carrier protein]-C-terminal-Gly-aminoethanethioate + 2-iminoacetate + 1-deoxy-D-xylulose 5-phosphate = [ThiS sulfur-carrier protein]-C-terminal Gly-Gly + 2-[(2R,5Z)-2-carboxy-4-methylthiazol-5(2H)-ylidene]ethyl phosphate + 2 H2O + H(+). It functions in the pathway cofactor biosynthesis; thiamine diphosphate biosynthesis. Its function is as follows. Catalyzes the rearrangement of 1-deoxy-D-xylulose 5-phosphate (DXP) to produce the thiazole phosphate moiety of thiamine. Sulfur is provided by the thiocarboxylate moiety of the carrier protein ThiS. In vitro, sulfur can be provided by H(2)S. This Bradyrhizobium sp. (strain BTAi1 / ATCC BAA-1182) protein is Thiazole synthase.